We begin with the raw amino-acid sequence, 71 residues long: DNA gyrase inhibitor YacG (71 aa).

Residues Cys-7, Cys-10, Cys-26, and Cys-30 each coordinate Zn(2+).

This sequence belongs to the DNA gyrase inhibitor YacG family. Interacts with GyrB. Requires Zn(2+) as cofactor.

Inhibits all the catalytic activities of DNA gyrase by preventing its interaction with DNA. Acts by binding directly to the C-terminal domain of GyrB, which probably disrupts DNA binding by the gyrase. This Shewanella amazonensis (strain ATCC BAA-1098 / SB2B) protein is DNA gyrase inhibitor YacG.